The chain runs to 118 residues: Small ribosomal subunit protein uS13 (118 aa).

Residues 92 to 118 form a disordered region; sequence KKHLPVRGQRTKTNARTRKGPRKPIKK.

Belongs to the universal ribosomal protein uS13 family. Part of the 30S ribosomal subunit. Forms a loose heterodimer with protein S19. Forms two bridges to the 50S subunit in the 70S ribosome.

Located at the top of the head of the 30S subunit, it contacts several helices of the 16S rRNA. In the 70S ribosome it contacts the 23S rRNA (bridge B1a) and protein L5 of the 50S subunit (bridge B1b), connecting the 2 subunits; these bridges are implicated in subunit movement. Contacts the tRNAs in the A and P-sites. In Wigglesworthia glossinidia brevipalpis, this protein is Small ribosomal subunit protein uS13.